Consider the following 583-residue polypeptide: Ankyrin repeat-containing protein NPR4 (583 aa).

ANK repeat units follow at residues 68–97, 119–148, 154–183, 188–218, 223–252, 257–286, and 291–321; these read HNDT…AAVA, AGET…AEGV, SGYD…LLAK, ANTS…GLVE, NGKN…QLAR, KGQT…AIVM, and NGNT…HVNA. The next 4 membrane-spanning stretches (helical) occupy residues 414–434, 452–472, 492–512, and 518–538; these read VTVV…TVPG, IFFI…VVQI, LMWL…YIVL, and WAAL…LGTM.

The protein localises to the cell membrane. Its function is as follows. Involved in salt stress tolerance. This Oryza sativa subsp. japonica (Rice) protein is Ankyrin repeat-containing protein NPR4.